A 356-amino-acid polypeptide reads, in one-letter code: Phosphoserine aminotransferase (356 aa).

An L-glutamate-binding site is contributed by R41. Pyridoxal 5'-phosphate contacts are provided by residues 76–77, W102, T150, D169, and Q192; that span reads AS. An N6-(pyridoxal phosphate)lysine modification is found at K193. 234-235 lines the pyridoxal 5'-phosphate pocket; the sequence is NT.

This sequence belongs to the class-V pyridoxal-phosphate-dependent aminotransferase family. SerC subfamily. As to quaternary structure, homodimer. Requires pyridoxal 5'-phosphate as cofactor.

It is found in the cytoplasm. It carries out the reaction O-phospho-L-serine + 2-oxoglutarate = 3-phosphooxypyruvate + L-glutamate. It catalyses the reaction 4-(phosphooxy)-L-threonine + 2-oxoglutarate = (R)-3-hydroxy-2-oxo-4-phosphooxybutanoate + L-glutamate. It functions in the pathway amino-acid biosynthesis; L-serine biosynthesis; L-serine from 3-phospho-D-glycerate: step 2/3. Its pathway is cofactor biosynthesis; pyridoxine 5'-phosphate biosynthesis; pyridoxine 5'-phosphate from D-erythrose 4-phosphate: step 3/5. In terms of biological role, catalyzes the reversible conversion of 3-phosphohydroxypyruvate to phosphoserine and of 3-hydroxy-2-oxo-4-phosphonooxybutanoate to phosphohydroxythreonine. The protein is Phosphoserine aminotransferase of Flavobacterium johnsoniae (strain ATCC 17061 / DSM 2064 / JCM 8514 / BCRC 14874 / CCUG 350202 / NBRC 14942 / NCIMB 11054 / UW101) (Cytophaga johnsonae).